Reading from the N-terminus, the 503-residue chain is Probable cytosol aminopeptidase (503 aa).

Mn(2+) is bound by residues lysine 274 and aspartate 279. The active site involves lysine 286. Residues aspartate 297, aspartate 356, and glutamate 358 each coordinate Mn(2+). The active site involves arginine 360.

Belongs to the peptidase M17 family. The cofactor is Mn(2+).

Its subcellular location is the cytoplasm. It catalyses the reaction Release of an N-terminal amino acid, Xaa-|-Yaa-, in which Xaa is preferably Leu, but may be other amino acids including Pro although not Arg or Lys, and Yaa may be Pro. Amino acid amides and methyl esters are also readily hydrolyzed, but rates on arylamides are exceedingly low.. The enzyme catalyses Release of an N-terminal amino acid, preferentially leucine, but not glutamic or aspartic acids.. Functionally, presumably involved in the processing and regular turnover of intracellular proteins. Catalyzes the removal of unsubstituted N-terminal amino acids from various peptides. The sequence is that of Probable cytosol aminopeptidase from Burkholderia lata (strain ATCC 17760 / DSM 23089 / LMG 22485 / NCIMB 9086 / R18194 / 383).